Here is a 160-residue protein sequence, read N- to C-terminus: Major strawberry allergen Fra a 1-E (160 aa).

It belongs to the BetVI family. Monomer. Interacts with AP. As to expression, highly expressed in roots. Expressed in open flowers. Expressed at low levels in leaves, flower buds and fruits.

Involved in the control of flavonoid biosynthesis in fruits, probably by binding directly to natural flavonoids. Binds the natural flavonoid quercetin-3-O-glucuronide with affinities in the low micromolar range. The sequence is that of Major strawberry allergen Fra a 1-E from Fragaria ananassa (Strawberry).